The chain runs to 91 residues: uncharacterized protein (91 aa).

Positions 1-25 (MLLQRIGIEHLRIWILLLLISLVPA) are cleaved as a signal peptide.

This is an uncharacterized protein from Caenorhabditis elegans.